We begin with the raw amino-acid sequence, 151 residues long: Apolipoprotein A-I (151 aa).

A signal peptide spans 1–18 (MKAVVLTLAVLFLTGSQA). A propeptide spanning residues 19-24 (RHFWQQ) is cleaved from the precursor. 2 consecutive repeat copies span residues 67-88 (LKLL…EQIG) and 89-110 (PVTQ…QEMS). A 4 X approximate tandem repeats region spans residues 67-143 (LKLLDNWDTL…EVELYRQKVA (77 aa)). Methionine 109 carries the methionine sulfoxide modification. The stretch at 111–121 (KDLEEVKQKVQ) is one 3; half-length repeat. Repeat unit 4 spans residues 122–143 (PYLDDFQKKWQEEVELYRQKVA).

Belongs to the apolipoprotein A1/A4/E family. As to quaternary structure, homodimer. Interacts with APOA1BP and CLU. Component of a sperm activating protein complex (SPAP), consisting of APOA1, an immunoglobulin heavy chain, an immunoglobulin light chain and albumin. Interacts with NDRG1. Interacts with SCGB3A2. Interacts with NAXE and YJEFN3. Post-translationally, glycosylated. Palmitoylated. In terms of processing, phosphorylation sites are present in the extracellular medium. As to expression, major protein of plasma HDL, also found in chylomicrons.

Its subcellular location is the secreted. Its function is as follows. Participates in the reverse transport of cholesterol from tissues to the liver for excretion by promoting cholesterol efflux from tissues and by acting as a cofactor for the lecithin cholesterol acyltransferase (LCAT). As part of the SPAP complex, activates spermatozoa motility. The chain is Apolipoprotein A-I (APOA1) from Panthera tigris altaica (Siberian tiger).